The sequence spans 24 residues: Hemocyanin subunit 4e (24 aa).

This sequence belongs to the tyrosinase family. Hemocyanin subfamily. In terms of tissue distribution, hemolymph.

It is found in the secreted. Its subcellular location is the extracellular space. Hemocyanins are copper-containing oxygen carriers occurring freely dissolved in the hemolymph of many mollusks and arthropods. This chain is Hemocyanin subunit 4e, found in Maja squinado (Mediterranean spider crab).